A 277-amino-acid chain; its full sequence is Phosphonates import ATP-binding protein PhnC 2 (277 aa).

Positions 3–251 (ISLNGISVQH…LLQALYAQHL (249 aa)) constitute an ABC transporter domain. 40–47 (GPSGAGKT) serves as a coordination point for ATP.

The protein belongs to the ABC transporter superfamily. Phosphonates importer (TC 3.A.1.9.1) family. As to quaternary structure, the complex is composed of two ATP-binding proteins (PhnC), two transmembrane proteins (PhnE) and a solute-binding protein (PhnD).

The protein resides in the cell inner membrane. It carries out the reaction phosphonate(out) + ATP + H2O = phosphonate(in) + ADP + phosphate + H(+). Part of the ABC transporter complex PhnCDE involved in phosphonates import. Responsible for energy coupling to the transport system. In Albidiferax ferrireducens (strain ATCC BAA-621 / DSM 15236 / T118) (Rhodoferax ferrireducens), this protein is Phosphonates import ATP-binding protein PhnC 2.